The sequence spans 167 residues: Osteocalcin 2a (167 aa).

Positions 1–18 (MKSLTLLTICAVLSVSLS) are cleaved as a signal peptide. Positions 19-118 (MNDLALDVVL…LASVLLRRKR (100 aa)) are excised as a propeptide. The segment at 28–99 (LDPAPDPATE…TTEDPAAATE (72 aa)) is disordered. Residues 38 to 87 (PAPAADSSASSSASSSSSSASDSSASASDSSDSDSSSASSSSSSSESASA) are compositionally biased toward low complexity. In terms of domain architecture, Gla spans 131 to 163 (QVESLSEVCELNLACEHMAETAGIVAAYTAYYG). Residues Glu-133, Glu-137, and Glu-140 each coordinate Ca(2+). 4-carboxyglutamate occurs at positions 133, 137, and 140. Residues Cys-139 and Cys-145 are joined by a disulfide bond.

This sequence belongs to the osteocalcin/matrix Gla protein family. Gamma-carboxyglutamate residues are formed by vitamin K dependent carboxylation. These residues are essential for the binding of calcium.

It is found in the secreted. In terms of biological role, binds strongly to apatite and calcium. This chain is Osteocalcin 2a, found in Oncorhynchus mykiss (Rainbow trout).